The following is a 360-amino-acid chain: Homoserine O-succinyltransferase (360 aa).

The active-site Acyl-thioester intermediate is the cysteine 146. Substrate-binding residues include lysine 167 and serine 196. Catalysis depends on histidine 239, which acts as the Proton acceptor. Glutamate 241 is an active-site residue. A substrate-binding site is contributed by arginine 253.

Belongs to the MetA family.

It localises to the cytoplasm. The catalysed reaction is L-homoserine + succinyl-CoA = O-succinyl-L-homoserine + CoA. Its pathway is amino-acid biosynthesis; L-methionine biosynthesis via de novo pathway; O-succinyl-L-homoserine from L-homoserine: step 1/1. Functionally, transfers a succinyl group from succinyl-CoA to L-homoserine, forming succinyl-L-homoserine. In vitro, can also use glutaryl-CoA as acyl donor. This is Homoserine O-succinyltransferase from Thiothrix nivea (strain ATCC 35100 / DSM 5205 / JP2).